The chain runs to 224 residues: Elongation factor 1-beta 2 (224 aa).

A2 carries the N-acetylalanine modification. The GST C-terminal domain occupies 14–65 (VKSVEEHLAGKTYISGDQLSVDDVKVYAAVPVKPSDAFPNASKWYESVASQL). A disordered region spans residues 89-139 (EAEAPAAAADDDDDMDLFGDETEEEKKAAEEREAAKKDTKKPKESGKSSVL). Acidic residues predominate over residues 97–111 (ADDDDDMDLFGDETE). Positions 112–134 (EEKKAAEEREAAKKDTKKPKESG) are enriched in basic and acidic residues.

The protein belongs to the EF-1-beta/EF-1-delta family. As to quaternary structure, EF-1 is composed of 4 subunits: alpha, beta (1B-alpha=beta'), delta (1B-beta), and gamma (1B-gamma).

In terms of biological role, EF-1-beta and EF-1-delta stimulate the exchange of GDP bound to EF-1-alpha to GTP. This Arabidopsis thaliana (Mouse-ear cress) protein is Elongation factor 1-beta 2.